We begin with the raw amino-acid sequence, 295 residues long: Ribosomal protein L11 methyltransferase (295 aa).

The S-adenosyl-L-methionine site is built by T146, G167, D189, and N231.

The protein belongs to the methyltransferase superfamily. PrmA family.

Its subcellular location is the cytoplasm. The enzyme catalyses L-lysyl-[protein] + 3 S-adenosyl-L-methionine = N(6),N(6),N(6)-trimethyl-L-lysyl-[protein] + 3 S-adenosyl-L-homocysteine + 3 H(+). Functionally, methylates ribosomal protein L11. The polypeptide is Ribosomal protein L11 methyltransferase (Vibrio cholerae serotype O1 (strain M66-2)).